Consider the following 544-residue polypeptide: Methionine--tRNA ligase (544 aa).

The short motif at 10–20 is the 'HIGH' region element; the sequence is PYANGSLHLGH. Residues cysteine 141, cysteine 144, cysteine 153, and cysteine 156 each contribute to the Zn(2+) site. A 'KMSKS' region motif is present at residues 329 to 333; the sequence is KLSTS. Position 332 (threonine 332) interacts with ATP.

Belongs to the class-I aminoacyl-tRNA synthetase family. MetG type 1 subfamily. As to quaternary structure, monomer. Zn(2+) is required as a cofactor.

The protein resides in the cytoplasm. The catalysed reaction is tRNA(Met) + L-methionine + ATP = L-methionyl-tRNA(Met) + AMP + diphosphate. Is required not only for elongation of protein synthesis but also for the initiation of all mRNA translation through initiator tRNA(fMet) aminoacylation. The polypeptide is Methionine--tRNA ligase (Bacillus mycoides (strain KBAB4) (Bacillus weihenstephanensis)).